Reading from the N-terminus, the 66-residue chain is Beta-toxin Chui4 (66 aa).

The LCN-type CS-alpha/beta domain maps to 1 to 66 (KEGYLVELGT…VWPLKNKTCK (66 aa)). Intrachain disulfides connect Cys12–Cys65, Cys16–Cys41, Cys25–Cys46, and Cys29–Cys48.

This sequence belongs to the long (4 C-C) scorpion toxin superfamily. Sodium channel inhibitor family. Beta subfamily. In terms of tissue distribution, expressed by the venom gland.

Its subcellular location is the secreted. Its function is as follows. Beta toxins bind voltage-independently at site-4 of sodium channels (Nav) and shift the voltage of activation toward more negative potentials thereby affecting sodium channel activation and promoting spontaneous and repetitive firing. Acts on human sodium channel Nav1.6/SCN8A. Also able to weakly shift the activation curves of human Nav1.2/SCN2A and Nav1.4/SCN4A. The sequence is that of Beta-toxin Chui4 from Centruroides huichol (Scorpion).